Consider the following 139-residue polypeptide: Nucleoside diphosphate kinase (139 aa).

Residues Lys-10, Phe-58, Arg-86, Thr-92, Arg-103, and Asn-113 each coordinate ATP. The active-site Pros-phosphohistidine intermediate is the His-116.

Belongs to the NDK family. As to quaternary structure, homotetramer. Mg(2+) is required as a cofactor.

It is found in the cytoplasm. It catalyses the reaction a 2'-deoxyribonucleoside 5'-diphosphate + ATP = a 2'-deoxyribonucleoside 5'-triphosphate + ADP. The catalysed reaction is a ribonucleoside 5'-diphosphate + ATP = a ribonucleoside 5'-triphosphate + ADP. Functionally, major role in the synthesis of nucleoside triphosphates other than ATP. The ATP gamma phosphate is transferred to the NDP beta phosphate via a ping-pong mechanism, using a phosphorylated active-site intermediate. This is Nucleoside diphosphate kinase from Caulobacter vibrioides (strain ATCC 19089 / CIP 103742 / CB 15) (Caulobacter crescentus).